Reading from the N-terminus, the 35-residue chain is Photosystem II reaction center protein T (35 aa).

A helical transmembrane segment spans residues 3–23 (ALVYTFLLVSTLGIIFFAIFF).

The protein belongs to the PsbT family. As to quaternary structure, PSII is composed of 1 copy each of membrane proteins PsbA, PsbB, PsbC, PsbD, PsbE, PsbF, PsbH, PsbI, PsbJ, PsbK, PsbL, PsbM, PsbT, PsbY, PsbZ, Psb30/Ycf12, at least 3 peripheral proteins of the oxygen-evolving complex and a large number of cofactors. It forms dimeric complexes.

It localises to the plastid. It is found in the chloroplast thylakoid membrane. Its function is as follows. Found at the monomer-monomer interface of the photosystem II (PS II) dimer, plays a role in assembly and dimerization of PSII. PSII is a light-driven water plastoquinone oxidoreductase, using light energy to abstract electrons from H(2)O, generating a proton gradient subsequently used for ATP formation. This Asarum canadense (Wild ginger) protein is Photosystem II reaction center protein T.